A 1174-amino-acid chain; its full sequence is Male determiner protein Mdmd(III) (1174 aa).

The segment covering 1–15 (MNATDAESRKPENKP) has biased composition (basic and acidic residues). 3 disordered regions span residues 1 to 51 (MNAT…SGQR), 80 to 109 (KDGS…HPVE), and 136 to 259 (KQLS…LRRS). Low complexity predominate over residues 16–35 (SSESSSSGSTSGSSDGEVSS). A compositionally biased stretch (polar residues) spans 36 to 47 (KTYFKNNKSKVL). Over residues 80-92 (KDGSNEMLPKEDS) the composition is skewed to basic and acidic residues. Positions 93–102 (INTNHNYTTD) are enriched in polar residues. The segment covering 138–153 (LSAYRSRSRSTRLSYS) has biased composition (low complexity). A compositionally biased stretch (basic residues) spans 167–180 (SRYKKSVLRNRRTS). Residues 183 to 200 (HGRDSSTTKRSVSRDKDN) are compositionally biased toward basic and acidic residues. Basic residues predominate over residues 201–223 (RLRRRIGSSRSHTRSHSRFRRSE). Positions 235 to 259 (RSQERRHERRRSMSSDYERIALRRS) are enriched in basic and acidic residues. Positions 348–531 (KKYIHGYINK…KVLFQVRRDG (184 aa)) constitute an MIF4G domain. In terms of domain architecture, MI spans 641-757 (ALRRTIYLTL…SWDVLDCIKL (117 aa)). The span at 840–857 (SAPSSSSSSSLSSELSAP) shows a compositional bias: low complexity. 2 disordered regions span residues 840 to 1045 (SAPS…SRTK) and 1096 to 1133 (KDNY…NHSR). Residues 869 to 909 (KKKHKGKNKKMTKKKNPSKKKEKTKKFVGKNKIAAKNKTIK) are compositionally biased toward basic residues. The span at 910 to 924 (RRTDKDNSSSKDNFL) shows a compositional bias: basic and acidic residues. Over residues 926–957 (SESSSNESISLDSLSSELFAPSSYSSSESSND) the composition is skewed to low complexity. Positions 963 to 1001 (KHKGKNKKMTKKKNPSNKKEKTKKKLSKNKKAPNKNTKK) are enriched in basic residues. Positions 1010–1020 (SSESSISESKS) are enriched in low complexity. The span at 1034-1045 (RKKRVTSKSRTK) shows a compositional bias: basic residues. Basic and acidic residues predominate over residues 1103 to 1118 (QNHEISQRHDSEIKRR). Residues 1119–1130 (REERKKRHHEKN) show a composition bias toward basic residues.

The protein belongs to the CWC22 family. In terms of assembly, component of the spliceosome C complex.

It is found in the nucleus speckle. Male determiner protein (M-factor) that controls male somatic sexual differentiation. Acts as a dominant factor that regulates the mRNA splicing of transformer (tra) and doublesex (dsx) transcripts and promotes expression of male splice forms of tra and dsx. Probably acts as a component of the spliceosome C complex required for mRNA splicing factor and exon-junction complex (EJC) assembly. Hinders eIF4AIII from non-specifically binding RNA and escorts it to the splicing machinery to promote EJC assembly on mature mRNAs. This chain is Male determiner protein Mdmd(III), found in Musca domestica (House fly).